A 433-amino-acid chain; its full sequence is Cyclin-dependent kinase F-3 (433 aa).

The 280-residue stretch at 4–283 folds into the Protein kinase domain; sequence YKVIREIGDG…AEQSLQHPFF (280 aa). ATP is bound by residues 10–18 and Lys-33; that span reads IGDGTCGNV. The Proton acceptor role is filled by Asp-125. The residue at position 151 (Ser-151) is a Phosphoserine. Position 156 is a phosphothreonine (Thr-156).

The protein belongs to the protein kinase superfamily. CMGC Ser/Thr protein kinase family. CDC2/CDKX subfamily.

The catalysed reaction is L-seryl-[protein] + ATP = O-phospho-L-seryl-[protein] + ADP + H(+). It carries out the reaction L-threonyl-[protein] + ATP = O-phospho-L-threonyl-[protein] + ADP + H(+). The enzyme catalyses [DNA-directed RNA polymerase] + ATP = phospho-[DNA-directed RNA polymerase] + ADP + H(+). The protein is Cyclin-dependent kinase F-3 (CDKF-3) of Oryza sativa subsp. japonica (Rice).